Here is a 420-residue protein sequence, read N- to C-terminus: UDP-N-acetylglucosamine 1-carboxyvinyltransferase (420 aa).

22–23 (KN) contributes to the phosphoenolpyruvate binding site. Residue Arg-94 participates in UDP-N-acetyl-alpha-D-glucosamine binding. Cys-118 acts as the Proton donor in catalysis. Residue Cys-118 is modified to 2-(S-cysteinyl)pyruvic acid O-phosphothioketal. 2 residues coordinate UDP-N-acetyl-alpha-D-glucosamine: Asp-307 and Ile-329.

It belongs to the EPSP synthase family. MurA subfamily.

The protein localises to the cytoplasm. It catalyses the reaction phosphoenolpyruvate + UDP-N-acetyl-alpha-D-glucosamine = UDP-N-acetyl-3-O-(1-carboxyvinyl)-alpha-D-glucosamine + phosphate. The protein operates within cell wall biogenesis; peptidoglycan biosynthesis. Functionally, cell wall formation. Adds enolpyruvyl to UDP-N-acetylglucosamine. This is UDP-N-acetylglucosamine 1-carboxyvinyltransferase from Granulibacter bethesdensis (strain ATCC BAA-1260 / CGDNIH1).